Reading from the N-terminus, the 274-residue chain is Orotidine 5'-phosphate decarboxylase (274 aa).

Catalysis depends on lysine 95, which acts as the Proton donor.

It belongs to the OMP decarboxylase family. Type 2 subfamily.

The catalysed reaction is orotidine 5'-phosphate + H(+) = UMP + CO2. Its pathway is pyrimidine metabolism; UMP biosynthesis via de novo pathway; UMP from orotate: step 2/2. The sequence is that of Orotidine 5'-phosphate decarboxylase from Variovorax paradoxus (strain S110).